The chain runs to 89 residues: Acylphosphatase (89 aa).

Residues 3-89 (HIHLQVFGRV…NQKLSDFRSI (87 aa)) enclose the Acylphosphatase-like domain. Catalysis depends on residues arginine 18 and asparagine 36.

This sequence belongs to the acylphosphatase family.

The enzyme catalyses an acyl phosphate + H2O = a carboxylate + phosphate + H(+). The protein is Acylphosphatase (acyP) of Staphylococcus aureus (strain Mu3 / ATCC 700698).